The sequence spans 150 residues: Probable deoxyuridine 5'-triphosphate nucleotidohydrolase (150 aa).

It belongs to the dCTP deaminase family. Archaeal dUTPase subfamily.

The catalysed reaction is dUTP + H2O = dUMP + diphosphate + H(+). Its pathway is pyrimidine metabolism; dUMP biosynthesis; dUMP from dCTP (dUTP route): step 2/2. In terms of biological role, this enzyme is involved in nucleotide metabolism: it produces dUMP, the immediate precursor of thymidine nucleotides and it decreases the intracellular concentration of dUTP so that uracil cannot be incorporated into DNA. This is Probable deoxyuridine 5'-triphosphate nucleotidohydrolase from Methanothermobacter thermautotrophicus (strain ATCC 29096 / DSM 1053 / JCM 10044 / NBRC 100330 / Delta H) (Methanobacterium thermoautotrophicum).